A 511-amino-acid chain; its full sequence is 2,3-bisphosphoglycerate-independent phosphoglycerate mutase (511 aa).

Asp12 lines the Mn(2+) pocket. Position 36 is a phosphotyrosine (Tyr36). A Mn(2+)-binding site is contributed by Ser62. Residue Ser62 is the Phosphoserine intermediate of the active site. Substrate-binding positions include His123, 153–154 (RD), Arg185, Arg191, 261–264 (RPDR), and Lys336. Asp403, His407, Asp444, His445, and His462 together coordinate Mn(2+).

This sequence belongs to the BPG-independent phosphoglycerate mutase family. As to quaternary structure, monomer. Mn(2+) serves as cofactor.

The catalysed reaction is (2R)-2-phosphoglycerate = (2R)-3-phosphoglycerate. Its pathway is carbohydrate degradation; glycolysis; pyruvate from D-glyceraldehyde 3-phosphate: step 3/5. In terms of biological role, catalyzes the interconversion of 2-phosphoglycerate and 3-phosphoglycerate. The polypeptide is 2,3-bisphosphoglycerate-independent phosphoglycerate mutase (Geobacillus kaustophilus (strain HTA426)).